A 210-amino-acid chain; its full sequence is Silenced mating-type protein ALPHA2 (210 aa).

The residue at position 1 (Met1) is an N-acetylmethionine. The interval 1–102 (MNKIPIKDLL…RSIENDRSNY (102 aa)) is N-terminal domain. Residues 103–128 (QLTQKNKSADGLVFNVVTQDMINKST) are flexible linker. The homeobox; TALE-type DNA-binding region spans 129 to 191 (KPYRGHRFTK…NRRRKEKTIT (63 aa)). The tract at residues 190 to 210 (ITIAPELADLLSGEPLAKKKE) is C-terminal tail.

This sequence belongs to the TALE/M-ATYP homeobox family.

The protein resides in the nucleus. In terms of biological role, mating type proteins are sequence specific DNA-binding proteins that act as master switches in yeast differentiation by controlling gene expression in a cell type-specific fashion. Silenced copy of ALPHA2 at HML. The polypeptide is Silenced mating-type protein ALPHA2 (HMLALPHA2) (Saccharomyces cerevisiae (strain ATCC 204508 / S288c) (Baker's yeast)).